The chain runs to 509 residues: ATP synthase subunit alpha (509 aa).

Gly169–Thr176 lines the ATP pocket.

It belongs to the ATPase alpha/beta chains family. F-type ATPases have 2 components, CF(1) - the catalytic core - and CF(0) - the membrane proton channel. CF(1) has five subunits: alpha(3), beta(3), gamma(1), delta(1), epsilon(1). CF(0) has three main subunits: a(1), b(2) and c(9-12). The alpha and beta chains form an alternating ring which encloses part of the gamma chain. CF(1) is attached to CF(0) by a central stalk formed by the gamma and epsilon chains, while a peripheral stalk is formed by the delta and b chains.

The protein resides in the cell inner membrane. It catalyses the reaction ATP + H2O + 4 H(+)(in) = ADP + phosphate + 5 H(+)(out). In terms of biological role, produces ATP from ADP in the presence of a proton gradient across the membrane. The alpha chain is a regulatory subunit. In Xanthobacter autotrophicus (strain ATCC BAA-1158 / Py2), this protein is ATP synthase subunit alpha.